The sequence spans 246 residues: uncharacterized protein (246 aa).

4 helical membrane passes run Thr32 to Ile52, Ile69 to Phe89, Ile121 to Ile141, and Leu146 to Cys166. 4Fe-4S ferredoxin-type domains follow at residues Phe185–Lys213 and Ile210–Phe239. Residues Cys194, Cys197, Cys200, Cys204, Cys219, Cys222, Cys225, and Cys229 each coordinate [4Fe-4S] cluster.

It is found in the cell membrane. This is an uncharacterized protein from Methanocaldococcus jannaschii (strain ATCC 43067 / DSM 2661 / JAL-1 / JCM 10045 / NBRC 100440) (Methanococcus jannaschii).